The chain runs to 252 residues: Hydroxyacylglutathione hydrolase (252 aa).

Zn(2+) contacts are provided by H54, H56, D58, H59, H111, D130, and H170.

This sequence belongs to the metallo-beta-lactamase superfamily. Glyoxalase II family. As to quaternary structure, monomer. It depends on Zn(2+) as a cofactor.

The catalysed reaction is an S-(2-hydroxyacyl)glutathione + H2O = a 2-hydroxy carboxylate + glutathione + H(+). It participates in secondary metabolite metabolism; methylglyoxal degradation; (R)-lactate from methylglyoxal: step 2/2. Thiolesterase that catalyzes the hydrolysis of S-D-lactoyl-glutathione to form glutathione and D-lactic acid. The protein is Hydroxyacylglutathione hydrolase of Francisella philomiragia subsp. philomiragia (strain ATCC 25017 / CCUG 19701 / FSC 153 / O#319-036).